Here is a 150-residue protein sequence, read N- to C-terminus: SsrA-binding protein (150 aa).

The protein belongs to the SmpB family.

The protein resides in the cytoplasm. Required for rescue of stalled ribosomes mediated by trans-translation. Binds to transfer-messenger RNA (tmRNA), required for stable association of tmRNA with ribosomes. tmRNA and SmpB together mimic tRNA shape, replacing the anticodon stem-loop with SmpB. tmRNA is encoded by the ssrA gene; the 2 termini fold to resemble tRNA(Ala) and it encodes a 'tag peptide', a short internal open reading frame. During trans-translation Ala-aminoacylated tmRNA acts like a tRNA, entering the A-site of stalled ribosomes, displacing the stalled mRNA. The ribosome then switches to translate the ORF on the tmRNA; the nascent peptide is terminated with the 'tag peptide' encoded by the tmRNA and targeted for degradation. The ribosome is freed to recommence translation, which seems to be the essential function of trans-translation. This chain is SsrA-binding protein, found in Campylobacter jejuni subsp. doylei (strain ATCC BAA-1458 / RM4099 / 269.97).